Here is a 950-residue protein sequence, read N- to C-terminus: A disintegrin and metalloproteinase with thrombospondin motifs 15 (950 aa).

The first 17 residues, 1-17, serve as a signal peptide directing secretion; that stretch reads MLLLGILTLAFAGRTAG. Residues 18 to 212 constitute a propeptide that is removed on maturation; it reads GSEPEREVVV…SRRRSGRAKR (195 aa). Residue asparagine 141 is glycosylated (N-linked (GlcNAc...) asparagine). The tract at residues 151–172 is disordered; sequence SQGAHLLQRRGVPGGPSGDPTS. Residues 172–179 carry the Cysteine switch motif; it reads SRCGVASG. Cysteine 174 is a binding site for Zn(2+). Residues 218–427 enclose the Peptidase M12B domain; the sequence is RYVETLVVAD…GHGDCLLDQP (210 aa). 11 disulfide bridges follow: cysteine 293/cysteine 345, cysteine 322/cysteine 327, cysteine 339/cysteine 422, cysteine 377/cysteine 406, cysteine 448/cysteine 470, cysteine 459/cysteine 480, cysteine 465/cysteine 499, cysteine 493/cysteine 504, cysteine 528/cysteine 565, cysteine 532/cysteine 570, and cysteine 543/cysteine 555. Histidine 361 provides a ligand contact to Zn(2+). Residue glutamate 362 is part of the active site. Positions 365 and 371 each coordinate Zn(2+). The 88-residue stretch at 428 to 515 folds into the Disintegrin domain; that stretch reads SKPISLPEDL…ERHNLNKHRV (88 aa). Positions 516-571 constitute a TSP type-1 1 domain; it reads DGSWAKWDPYGPCSRTCGGGVQLARRQCTNPTPANGGKYCEGVRVKYRSCNLEPCP. N-linked (GlcNAc...) asparagine glycosylation is found at asparagine 591, asparagine 623, and asparagine 679. Positions 701-838 are spacer; it reads AIPAGASSID…SNQVEQPDDR (138 aa). The disordered stretch occupies residues 798 to 822; it reads FYLPKEPREDKSSHPKDPRGPSVLH. Residues 802 to 816 are compositionally biased toward basic and acidic residues; it reads KEPREDKSSHPKDPR. TSP type-1 domains lie at 839–895 and 896–949; these read PPAR…EPCP and TWEL…VLRP.

Requires Zn(2+) as cofactor. Post-translationally, the precursor is cleaved by a furin endopeptidase. Glycosylated. Can be O-fucosylated by POFUT2 on a serine or a threonine residue found within the consensus sequence C1-X(2)-(S/T)-C2-G of the TSP type-1 repeat domains where C1 and C2 are the first and second cysteine residue of the repeat, respectively. Fucosylated repeats can then be further glycosylated by the addition of a beta-1,3-glucose residue by the glucosyltransferase, B3GALTL. Fucosylation mediates the efficient secretion of ADAMTS family members. Can be C-glycosylated with one or two mannose molecules on tryptophan residues within the consensus sequence W-X-X-W of the TPRs. Also N-glycosylated. These other glycosylations can also facilitate secretion. As to expression, expressed in fetal liver and kidney, but not in any of the adult tissues examined.

It localises to the secreted. Its subcellular location is the extracellular space. It is found in the extracellular matrix. The protein resides in the cell surface. Metalloprotease which has proteolytic activity against the proteoglycan VCAN, cleaving it at the 'Glu-1428-|-1429-Ala' site. Cleaves VCAN in the pericellular matrix surrounding myoblasts, facilitating myoblast contact and fusion which is required for skeletal muscle development and regeneration. This Homo sapiens (Human) protein is A disintegrin and metalloproteinase with thrombospondin motifs 15 (ADAMTS15).